Reading from the N-terminus, the 64-residue chain is DNA-binding protein 7b (64 aa).

An N6-methyllysine mark is found at K5 and K7.

This sequence belongs to the 7 kDa DNA-binding/endoribonuclease P2 family. As to quaternary structure, monomer. In terms of processing, lys-5 and Lys-7 may be methylated.

It localises to the cytoplasm. Its function is as follows. Can constrain negative DNA supercoils. May be involved in maintaining the integrity of the genome at high temperature. This Saccharolobus shibatae (strain ATCC 51178 / DSM 5389 / JCM 8931 / NBRC 15437 / B12) (Sulfolobus shibatae) protein is DNA-binding protein 7b.